The following is a 60-amino-acid chain: Potassium channel toxin alpha-KTx 12.7 (60 aa).

Positions 1–22 are cleaved as a signal peptide; sequence MSNMPVLIITLLLFSMYISTAA. Intrachain disulfides connect C30–C51, C36–C56, and C40–C58.

This sequence belongs to the short scorpion toxin superfamily. Potassium channel inhibitor family. Alpha-KTx 12 subfamily. In terms of tissue distribution, expressed by the venom gland.

It is found in the secreted. Functionally, inhibits voltage-gated potassium channels. The sequence is that of Potassium channel toxin alpha-KTx 12.7 from Lychas mucronatus (Chinese swimming scorpion).